The chain runs to 335 residues: Ketol-acid reductoisomerase (NADP(+)) (335 aa).

The KARI N-terminal Rossmann domain occupies 1-182; that stretch reads MATIIYDDET…GATRAGVYET (182 aa). Residues 25-28, arginine 48, serine 51, serine 53, and 83-86 each bind NADP(+); these read YGSQ and DEKQ. Histidine 108 is an active-site residue. Glycine 134 serves as a coordination point for NADP(+). The KARI C-terminal knotted domain occupies 183-328; it reads TFREETETDL…KQIRANIPWL (146 aa). Residues aspartate 191, glutamate 195, glutamate 227, and glutamate 231 each coordinate Mg(2+). Serine 252 serves as a coordination point for substrate.

Belongs to the ketol-acid reductoisomerase family. The cofactor is Mg(2+).

It carries out the reaction (2R)-2,3-dihydroxy-3-methylbutanoate + NADP(+) = (2S)-2-acetolactate + NADPH + H(+). The catalysed reaction is (2R,3R)-2,3-dihydroxy-3-methylpentanoate + NADP(+) = (S)-2-ethyl-2-hydroxy-3-oxobutanoate + NADPH + H(+). It participates in amino-acid biosynthesis; L-isoleucine biosynthesis; L-isoleucine from 2-oxobutanoate: step 2/4. It functions in the pathway amino-acid biosynthesis; L-valine biosynthesis; L-valine from pyruvate: step 2/4. Functionally, involved in the biosynthesis of branched-chain amino acids (BCAA). Catalyzes an alkyl-migration followed by a ketol-acid reduction of (S)-2-acetolactate (S2AL) to yield (R)-2,3-dihydroxy-isovalerate. In the isomerase reaction, S2AL is rearranged via a Mg-dependent methyl migration to produce 3-hydroxy-3-methyl-2-ketobutyrate (HMKB). In the reductase reaction, this 2-ketoacid undergoes a metal-dependent reduction by NADPH to yield (R)-2,3-dihydroxy-isovalerate. This Methanosarcina mazei (strain ATCC BAA-159 / DSM 3647 / Goe1 / Go1 / JCM 11833 / OCM 88) (Methanosarcina frisia) protein is Ketol-acid reductoisomerase (NADP(+)).